Reading from the N-terminus, the 470-residue chain is ATP synthase subunit beta (470 aa).

Position 157-164 (157-164 (GGAGVGKT)) interacts with ATP.

This sequence belongs to the ATPase alpha/beta chains family. F-type ATPases have 2 components, CF(1) - the catalytic core - and CF(0) - the membrane proton channel. CF(1) has five subunits: alpha(3), beta(3), gamma(1), delta(1), epsilon(1). CF(0) has three main subunits: a(1), b(2) and c(9-12). The alpha and beta chains form an alternating ring which encloses part of the gamma chain. CF(1) is attached to CF(0) by a central stalk formed by the gamma and epsilon chains, while a peripheral stalk is formed by the delta and b chains.

The protein resides in the cell inner membrane. It carries out the reaction ATP + H2O + 4 H(+)(in) = ADP + phosphate + 5 H(+)(out). Its function is as follows. Produces ATP from ADP in the presence of a proton gradient across the membrane. The catalytic sites are hosted primarily by the beta subunits. This Geobacter metallireducens (strain ATCC 53774 / DSM 7210 / GS-15) protein is ATP synthase subunit beta.